We begin with the raw amino-acid sequence, 142 residues long: Putative pre-16S rRNA nuclease (142 aa).

It belongs to the YqgF nuclease family.

It is found in the cytoplasm. Could be a nuclease involved in processing of the 5'-end of pre-16S rRNA. This chain is Putative pre-16S rRNA nuclease, found in Lactobacillus delbrueckii subsp. bulgaricus (strain ATCC 11842 / DSM 20081 / BCRC 10696 / JCM 1002 / NBRC 13953 / NCIMB 11778 / NCTC 12712 / WDCM 00102 / Lb 14).